Consider the following 824-residue polypeptide: Lysine-specific histone demethylase 1B homolog (824 aa).

The tract at residues M1–V31 is disordered. Residues P245–P346 enclose the SWIRM domain. FAD-binding positions include P352 to I407, V579, E788, and Q796 to M798.

It belongs to the flavin monoamine oxidase family. It depends on FAD as a cofactor. In terms of tissue distribution, in hermaphrodites, expressed in gut cells, embryonic cells and sheath cells. Not expressed in sperm or pharyngeal neurons.

It is found in the nucleus. It catalyses the reaction N(6),N(6)-dimethyl-L-lysyl(4)-[histone H3] + 2 A + 2 H2O = L-lysyl(4)-[histone H3] + 2 formaldehyde + 2 AH2. In terms of biological role, histone demethylase that demethylates di-methylated 'Lys-4' of histone H3, a specific tag for epigenetic transcriptional activation, thereby acting as a corepressor. Acts by oxidizing the substrate by FAD to generate the corresponding imine that is subsequently hydrolyzed. Plays a role in the mitotic development of the germline. May be involved in H3 demethylation in mitotic cells including gut and embryonic cells. Plays a role in sensitivity upon interstrand cross-link DNA damage, probably by positively regulating the expression of mlh-1. Plays a role in developmental growth and lifespan regulation in response to ultraviolet-induced damage. No obvious role in larval development, sex chromosome segregation or for regulating meiotic crossover frequency. This is Lysine-specific histone demethylase 1B homolog from Caenorhabditis elegans.